Consider the following 604-residue polypeptide: Glutamine--fructose-6-phosphate aminotransferase [isomerizing] (604 aa).

Cysteine 2 (nucleophile; for GATase activity) is an active-site residue. The region spanning 2–218 (CGIVGVVGNR…DKELVILTKD (217 aa)) is the Glutamine amidotransferase type-2 domain. 2 consecutive SIS domains span residues 284 to 423 (IITS…ANGK) and 452 to 594 (VAEK…VDKP). Catalysis depends on lysine 599, which acts as the For Fru-6P isomerization activity.

As to quaternary structure, homodimer.

It is found in the cytoplasm. It carries out the reaction D-fructose 6-phosphate + L-glutamine = D-glucosamine 6-phosphate + L-glutamate. Functionally, catalyzes the first step in hexosamine metabolism, converting fructose-6P into glucosamine-6P using glutamine as a nitrogen source. The protein is Glutamine--fructose-6-phosphate aminotransferase [isomerizing] of Streptococcus pyogenes serotype M3 (strain ATCC BAA-595 / MGAS315).